Consider the following 399-residue polypeptide: Zinc finger HIT domain-containing protein 2 (399 aa).

Met-1 carries the post-translational modification N-acetylmethionine. Zn(2+) contacts are provided by Cys-7, Cys-10, Cys-22, Cys-25, Cys-30, Cys-34, His-38, and Cys-41. The HIT-type zinc finger occupies 7–41 (CGFCPAGEALPARYTCPRCNAPYCSLRCYRAHGAC). Disordered regions lie at residues 70-97 (RLREQREAEDEPEEAGLGPGARPGGLSG) and 152-175 (AEPEPAPARTALQSGDDAAAAEPF). Gly residues predominate over residues 86–96 (LGPGARPGGLS). Thr-161 bears the Phosphothreonine mark.

As to quaternary structure, interacts (via HIT-type zinc finger) with RUVBL2 in the presence of ATP or ADP; shows a stronger interaction in the presence of ADP. Low expression in most tissues; highly expressed in testis; particularly in seminiferous tubules.

May act as a bridging factor mediating the interaction between the R2TP/Prefoldin-like (R2TP/PFDL) complex and U5 small nuclear ribonucleoprotein (U5 snRNP). Required for the interaction of R2TP complex subunit RPAP3 and prefoldin-like subunit URI1 with U5 snRNP proteins EFTUD2 and PRPF8. May play a role in regulating the composition of the U5 snRNP complex. The protein is Zinc finger HIT domain-containing protein 2 (Znhit2) of Mus musculus (Mouse).